Consider the following 224-residue polypeptide: Lipoprotein-releasing system ATP-binding protein LolD (224 aa).

The ABC transporter domain occupies 6-224 (VRLRELRRSF…VVRLHEGVLE (219 aa)). An ATP-binding site is contributed by 42–49 (GPSGSGKS).

This sequence belongs to the ABC transporter superfamily. Lipoprotein translocase (TC 3.A.1.125) family. As to quaternary structure, the complex is composed of two ATP-binding proteins (LolD) and two transmembrane proteins (LolC and LolE).

It localises to the cell inner membrane. Functionally, part of the ABC transporter complex LolCDE involved in the translocation of mature outer membrane-directed lipoproteins, from the inner membrane to the periplasmic chaperone, LolA. Responsible for the formation of the LolA-lipoprotein complex in an ATP-dependent manner. This is Lipoprotein-releasing system ATP-binding protein LolD from Novosphingobium aromaticivorans (strain ATCC 700278 / DSM 12444 / CCUG 56034 / CIP 105152 / NBRC 16084 / F199).